The primary structure comprises 1487 residues: Adhesion G protein-coupled receptor L2 (1487 aa).

The signal sequence occupies residues 1–25 (MVSSGCRMRSLWFIIIISFSPSTEG). Topologically, residues 26 to 855 (FSRAALPFGL…VHHLLLTVIT (830 aa)) are extracellular. Residues 41–130 (SCEGYSIDLR…KYLEVQYECV (90 aa)) enclose the SUEL-type lectin domain. N-linked (GlcNAc...) asparagine glycosylation occurs at N99. Residues 139–398 (VCPGTLKAIV…ILRYSLEFGP (260 aa)) form the Olfactomedin-like domain. The span at 423-439 (STTSSASQRGPVSSTAA) shows a compositional bias: polar residues. The disordered stretch occupies residues 423 to 461 (STTSSASQRGPVSSTAAGPQDGSRGTKPPPAVSTTKIPP). N-linked (GlcNAc...) asparagine glycosylation is found at N524 and N735. The GAIN-B domain occupies 663 to 841 (TRVSMPTENI…AILMAHREIA (179 aa)). Disulfide bonds link C792–C823 and C811–C825. Residues 792–841 (CSFWNYSERTMMGYWSTQGCKLVDTNKTRTTCACSHLTNFAILMAHREIA) are GPS. The stachel stretch occupies residues 829 to 841 (TNFAILMAHREIA). Residues 856 to 876 (WVGIVVSLVCLAICIFTFCFF) form a helical membrane-spanning segment. At 877-884 (RGLQSDRN) the chain is on the cytoplasmic side. Residues 885 to 905 (TIHKNLCINLFIAEFIFLIGI) traverse the membrane as a helical segment. The Extracellular portion of the chain corresponds to 906 to 911 (DKTKYT). A helical membrane pass occupies residues 912 to 932 (IACPVFAGLLHFFFLAAFSWM). At 933–955 (CLEGVQLYLMLVEVFESEYSRKK) the chain is on the cytoplasmic side. Residues 956 to 976 (YYYVAGYLFPATVVGVSAAID) traverse the membrane as a helical segment. The Extracellular segment spans residues 977-994 (YKSYGTVQACWLHVDNYF). The helical transmembrane segment at 995-1015 (IWSFIGPVTFIILLNIIFLVI) threads the bilayer. Residues 1016–1064 (TLCKMVKHSNTLKPDSSRLENINNYRVCDGYYNTDLPGYEDNKPFIKSW) lie on the Cytoplasmic side of the membrane. A helical transmembrane segment spans residues 1065 to 1085 (VLGAFALLCLLGLTWSFGLLF). Residues 1086-1090 (VNEET) are Extracellular-facing. The chain crosses the membrane as a helical span at residues 1091-1111 (VVMAYLFTAFNAFQGLFIFIF). A disordered region spans residues 1386–1430 (EADDHLQSPNRDSLYTSMPNLRDSPYPESSPDMAEDLSPSRRSEN). Over residues 1392-1404 (QSPNRDSLYTSMP) the composition is skewed to polar residues. 3 positions are modified to phosphoserine: S1402, S1437, and S1458.

The protein belongs to the G-protein coupled receptor 2 family. Adhesion G-protein coupled receptor (ADGR) subfamily. In terms of assembly, heterodimer of 2 chains generated by proteolytic processing; the large extracellular N-terminal fragment and the membrane-bound C-terminal fragment predominantly remain associated and non-covalently linked. Post-translationally, autoproteolytically processed at the GPS region of the GAIN-B domain; this cleavage modulates receptor activity. As to expression, ubiquitously expressed. In neurons, specifically localizes to dendritic domains of CA1 pyramidal neurons in the S. lacunosummoleculare.

It localises to the postsynaptic cell membrane. With respect to regulation, forms a heterodimer of 2 chains generated by proteolytic processing that remain associated through non-covalent interactions mediated by the GAIN-B domain. In the inactivated receptor, the Stachel sequence (also named stalk) is embedded in the GAIN-B domain, where it adopts a beta-strand conformation. On activation, the Stachel moves into the 7 transmembrane region and adopts a twisted hook-shaped configuration that forms contacts within the receptor, leading to coupling of a G-alpha protein, which activates signaling. The cleaved GAIN-B and N-terminal domains can then dissociate from the rest of the receptor. Functionally, orphan adhesion G-protein coupled receptor (aGPCR), which mediates synapse specificity. Ligand binding causes a conformation change that triggers signaling via guanine nucleotide-binding proteins (G proteins) and modulates the activity of downstream effectors. Following G-protein coupled receptor activation, associates with cell adhesion molecules that are expressed at the surface of adjacent cells to direct synapse specificity. Specifically mediates the establishment of perforant-path synapses on CA1-region pyramidal neurons in the hippocampus. Localizes to postsynaptic spines in excitatory synapses in the S.lacunosum-moleculare and interacts with presynaptic cell adhesion molecules, such as teneurins, promoting synapse formation. In Mus musculus (Mouse), this protein is Adhesion G protein-coupled receptor L2.